The chain runs to 1064 residues: Leucine--tRNA ligase (1064 aa).

A disordered region spans residues 1-25; it reads MARAMSETAEPGARTGAADTTVAPT. The short motif at 106-117 is the 'HIGH' region element; it reads PYPSGSGLHVGH. Residues 435–456 are disordered; the sequence is GRPGGGTEPADTAGPEAGADPA. The short motif at 831 to 835 is the 'KMSKS' region element; it reads KMGKS. Position 834 (Lys834) interacts with ATP.

Belongs to the class-I aminoacyl-tRNA synthetase family.

The protein resides in the cytoplasm. It carries out the reaction tRNA(Leu) + L-leucine + ATP = L-leucyl-tRNA(Leu) + AMP + diphosphate. This chain is Leucine--tRNA ligase, found in Frankia casuarinae (strain DSM 45818 / CECT 9043 / HFP020203 / CcI3).